The following is a 201-amino-acid chain: UPF0301 protein RHA1_ro03630 (201 aa).

This sequence belongs to the UPF0301 (AlgH) family.

The polypeptide is UPF0301 protein RHA1_ro03630 (Rhodococcus jostii (strain RHA1)).